A 338-amino-acid chain; its full sequence is Methionine import ATP-binding protein MetN 2 (338 aa).

The ABC transporter domain maps to 2 to 242; the sequence is IEIEKVCVDF…PQHAFTQQLV (241 aa). An ATP-binding site is contributed by 39–46; it reads GTSGAGKS.

The protein belongs to the ABC transporter superfamily. Methionine importer (TC 3.A.1.24) family. As to quaternary structure, the complex is composed of two ATP-binding proteins (MetN), two transmembrane proteins (MetI) and a solute-binding protein (MetQ).

It localises to the cell inner membrane. The enzyme catalyses L-methionine(out) + ATP + H2O = L-methionine(in) + ADP + phosphate + H(+). It catalyses the reaction D-methionine(out) + ATP + H2O = D-methionine(in) + ADP + phosphate + H(+). Its function is as follows. Part of the ABC transporter complex MetNIQ involved in methionine import. Responsible for energy coupling to the transport system. The polypeptide is Methionine import ATP-binding protein MetN 2 (Salmonella choleraesuis (strain SC-B67)).